A 224-amino-acid polypeptide reads, in one-letter code: Adenylate kinase (224 aa).

ATP is bound at residue 10-15 (GSGKGT). Positions 30-59 (ESGAIFRDNIKGGTDLGMKAKAYIDKGDLV) are NMP. Residues serine 31, arginine 36, 57-59 (DLV), 85-88 (GFPR), and glutamine 92 each bind AMP. Positions 126–165 (GRRLCENDNNHPNNIFIDAIKPNGDKCRVCGGALSSRADD) are LID. Arginine 127 is a binding site for ATP. The AMP site is built by arginine 162 and arginine 174. Asparagine 211 contacts ATP.

This sequence belongs to the adenylate kinase family. In terms of assembly, monomer.

The protein localises to the cytoplasm. The enzyme catalyses AMP + ATP = 2 ADP. The protein operates within purine metabolism; AMP biosynthesis via salvage pathway; AMP from ADP: step 1/1. Catalyzes the reversible transfer of the terminal phosphate group between ATP and AMP. Plays an important role in cellular energy homeostasis and in adenine nucleotide metabolism. This is Adenylate kinase from Desulforapulum autotrophicum (strain ATCC 43914 / DSM 3382 / VKM B-1955 / HRM2) (Desulfobacterium autotrophicum).